The following is a 273-amino-acid chain: MTKDIMDAVFIKEMAKTTSNLYRLGWDERNGGNITYLLDEKEVVEYLDVKQIIRTIPMDFDGKKLAGKYFLVTGSGKYFKNVEEAPAVNLGVIQVSEDGKAVHLLWGYTDGGLPTSELPAHFMSHIARLSVDPENRVVMHCHATHLLAMTFTHELTEREFTRTLWQMCTECLVVFPEGVGIIPWLVPGTNEIGEATSEKMKENRLIVWPHHGIYGAGKSMDETFGLIETAEKAAEVYTIVMSQGGIKQAITDEQLKALGERFGVEAKAGYLNN.

Residue glutamate 117 is part of the active site. Histidine 140, histidine 142, and histidine 211 together coordinate Zn(2+).

Belongs to the aldolase class II family. RhaD subfamily. Zn(2+) is required as a cofactor.

It is found in the cytoplasm. It catalyses the reaction L-rhamnulose 1-phosphate = (S)-lactaldehyde + dihydroxyacetone phosphate. Its pathway is carbohydrate degradation; L-rhamnose degradation; glycerone phosphate from L-rhamnose: step 3/3. Functionally, catalyzes the reversible cleavage of L-rhamnulose-1-phosphate to dihydroxyacetone phosphate (DHAP) and L-lactaldehyde. The polypeptide is Rhamnulose-1-phosphate aldolase (Listeria monocytogenes serotype 4b (strain CLIP80459)).